A 246-amino-acid chain; its full sequence is Dehydration-responsive element-binding protein 1H (246 aa).

A disordered region spans residues 1–43; that stretch reads MDMAGHEVNSSSSSSGAESSSSSSGRQQYKKRPAGRTKFRETR. The segment covering 10-24 has biased composition (low complexity); sequence SSSSSSGAESSSSSS. Basic residues predominate over residues 28-37; it reads QYKKRPAGRT. Positions 46–110 form a DNA-binding region, AP2/ERF; sequence VYRGVRRRGG…GGGAACLNFQ (65 aa). A disordered region spans residues 155–187; the sequence is AMDEATSGVSAPPPLANNAGSSETPGPSSIDGT. Over residues 172–181 the composition is skewed to polar residues; that stretch reads NAGSSETPGP.

The protein belongs to the AP2/ERF transcription factor family. ERF subfamily.

Its subcellular location is the nucleus. In terms of biological role, transcriptional activator that binds specifically to the DNA sequence 5'-[AG]CCGAC-3'. Binding to the C-repeat/DRE element mediates high salinity- and dehydration-inducible transcription. This is Dehydration-responsive element-binding protein 1H (DREB1H) from Oryza sativa subsp. indica (Rice).